Consider the following 62-residue polypeptide: Large ribosomal subunit protein bL32 (62 aa).

The tract at residues M1–I20 is disordered. The span at H7–I20 shows a compositional bias: basic residues.

This sequence belongs to the bacterial ribosomal protein bL32 family.

The sequence is that of Large ribosomal subunit protein bL32 from Lactobacillus acidophilus (strain ATCC 700396 / NCK56 / N2 / NCFM).